The primary structure comprises 88 residues: Beta-insect excitatory toxin LqhIT1a (88 aa).

Positions 1 to 18 are cleaved as a signal peptide; sequence MKFFLLFLVVLPIMGVLG. The 64-residue stretch at 20–83 folds into the LCN-type CS-alpha/beta domain; it reads KNGYAVDSKG…ISGTTKKYCD (64 aa). 4 disulfides stabilise this stretch: Cys-34-Cys-55, Cys-40-Cys-60, Cys-44-Cys-62, and Cys-56-Cys-82.

This sequence belongs to the long (4 C-C) scorpion toxin superfamily. Sodium channel inhibitor family. Beta subfamily. In terms of tissue distribution, expressed by the venom gland.

It is found in the secreted. Functionally, excitatory insect toxins induce a spastic paralysis. They bind voltage-independently at site-4 of sodium channels (Nav) and shift the voltage of activation toward more negative potentials thereby affecting sodium channel activation and promoting spontaneous and repetitive firing. The protein is Beta-insect excitatory toxin LqhIT1a of Leiurus hebraeus (Hebrew deathstalker scorpion).